The following is a 158-amino-acid chain: Rhombotin-2 (158 aa).

2 LIM zinc-binding domains span residues 30 to 89 (CGGC…RLFG) and 94 to 153 (CASC…EWTK).

In terms of assembly, interacts via its LIM domains with ELF2 and LDB1. Also interacts with basic helix-loop-helix protein TAL1/SCL and can assemble in a complex with LMO2 and TAL1/SCL. Interacts with BEX2 and KDM5A.

Its subcellular location is the nucleus. In terms of biological role, acts with TAL1/SCL to regulate red blood cell development. Also acts with LDB1 to maintain erythroid precursors in an immature state. The sequence is that of Rhombotin-2 (LMO2) from Homo sapiens (Human).